Reading from the N-terminus, the 157-residue chain is 6,7-dimethyl-8-ribityllumazine synthase (157 aa).

5-amino-6-(D-ribitylamino)uracil is bound by residues F23, A57–E59, and A81–I83. A86–T87 contributes to the (2S)-2-hydroxy-3-oxobutyl phosphate binding site. H89 serves as the catalytic Proton donor. F114 contributes to the 5-amino-6-(D-ribitylamino)uracil binding site. R128 contacts (2S)-2-hydroxy-3-oxobutyl phosphate.

It belongs to the DMRL synthase family.

The enzyme catalyses (2S)-2-hydroxy-3-oxobutyl phosphate + 5-amino-6-(D-ribitylamino)uracil = 6,7-dimethyl-8-(1-D-ribityl)lumazine + phosphate + 2 H2O + H(+). The protein operates within cofactor biosynthesis; riboflavin biosynthesis; riboflavin from 2-hydroxy-3-oxobutyl phosphate and 5-amino-6-(D-ribitylamino)uracil: step 1/2. Catalyzes the formation of 6,7-dimethyl-8-ribityllumazine by condensation of 5-amino-6-(D-ribitylamino)uracil with 3,4-dihydroxy-2-butanone 4-phosphate. This is the penultimate step in the biosynthesis of riboflavin. The sequence is that of 6,7-dimethyl-8-ribityllumazine synthase from Desulforapulum autotrophicum (strain ATCC 43914 / DSM 3382 / VKM B-1955 / HRM2) (Desulfobacterium autotrophicum).